The following is a 986-amino-acid chain: Isoleucine--tRNA ligase (986 aa).

The 'KMSKS' region motif lies at glutamate 534–serine 538. Position 537 (lysine 537) interacts with ATP.

This sequence belongs to the class-I aminoacyl-tRNA synthetase family. IleS type 2 subfamily. In terms of assembly, monomer. Zn(2+) serves as cofactor.

The protein localises to the cytoplasm. The enzyme catalyses tRNA(Ile) + L-isoleucine + ATP = L-isoleucyl-tRNA(Ile) + AMP + diphosphate. Functionally, catalyzes the attachment of isoleucine to tRNA(Ile). As IleRS can inadvertently accommodate and process structurally similar amino acids such as valine, to avoid such errors it has two additional distinct tRNA(Ile)-dependent editing activities. One activity is designated as 'pretransfer' editing and involves the hydrolysis of activated Val-AMP. The other activity is designated 'posttransfer' editing and involves deacylation of mischarged Val-tRNA(Ile). This Saccharolobus solfataricus (strain ATCC 35092 / DSM 1617 / JCM 11322 / P2) (Sulfolobus solfataricus) protein is Isoleucine--tRNA ligase (ileS).